A 316-amino-acid chain; its full sequence is Peroxisomal targeting signal 2 receptor (316 aa).

WD repeat units lie at residues aspartate 56–proline 96, glutamate 102–threonine 142, glutamate 145–threonine 185, alanine 188–threonine 228, glycine 232–isoleucine 272, and histidine 277–arginine 316.

Belongs to the WD repeat peroxin-7 family. As to quaternary structure, interacts with PEX5; interaction only takes place when PEX7 is associated with cargo proteins.

It localises to the cytoplasm. The protein localises to the cytosol. Its subcellular location is the peroxisome matrix. Its function is as follows. Receptor required for the peroxisomal import of proteins containing a C-terminal PTS2-type peroxisomal targeting signal. Specifically binds to cargo proteins containing a PTS2 peroxisomal targeting signal in the cytosol. Cargo protein-binding triggers interaction with PEX5 and formation of a ternary complex composed of PEX5 and PEX7 along with PTS2-containing cargo proteins, which is tranlocated into peroxisomes by passing through the PEX13-PEX14 docking complex. The chain is Peroxisomal targeting signal 2 receptor (pex7) from Dictyostelium discoideum (Social amoeba).